Consider the following 302-residue polypeptide: Uricase (302 aa).

Residues lysine 22 and threonine 67 each act as charge relay system in the active site. Positions 67, 68, 163, 180, 223, and 249 each coordinate urate. Histidine 251 (charge relay system) is an active-site residue.

The protein belongs to the uricase family. Homotetramer.

The enzyme catalyses urate + O2 + H2O = 5-hydroxyisourate + H2O2. It participates in purine metabolism; urate degradation; (S)-allantoin from urate: step 1/3. In terms of biological role, catalyzes the oxidation of uric acid to 5-hydroxyisourate, which is further processed to form (S)-allantoin. This is Uricase (uox) from Arthrobacter globiformis.